The chain runs to 1492 residues: MFNSFQQQGTIQPQGTGYYPTQQGQQGQQGQQGQQGQQGQQGQQQQSFQSQPPFNSYVQQPNAGIGGFPQGQSSFGNTSQMTNQPSSGFTSGQYAGGSNANSNLFNQSSQQFGGVGNNNVNVNQSSDPSSLLPQGGSYNNAGLQRPQLQPVQSVQSVHSMHSLGPAQTMSSINPIQSQTGDYYGNALSQQQSRTSLMSTSSQMGGNQLYDTNSQILQPQQQQQQQQQNIQVTAPLQQQSTGLYSSASQPAQAANLQPQQTGFYSQQPLQPQQTGFYAQQSQVPLEPLKPTATGFVNSFANNGINNDIKIPTMRLSFITAQDQAKFETLFRSRVSKGSNTISGDNCRAILMKSGLQPKQLAKIWTLCDTSKAGELLFPEFALAMHLVNEVLQGDSIPYELDIKSKNEVNSFIDAINMSIVSGSTEEPAKQATPFDSLFTNGLSVLQPQATGMIPATSFGVPLQNQMTGGMLNPQATGMMPQTSFGMPMQVTGGPLLSQTTGGALQPQTTGFMPSTSFGMPLQTQITGGAMMPNLQPQTTGSMMPNLQPQTTGSMMPNLQPQTTGSMMPNLQSQTTGSMMPNLQSQMTGSMGVGTTSFGMQPQATGNISLQPNPTGFLPVSNFNPTAPLTAQKTGFGNNEIYSQRNFGSSLGQAEEDSISTEEKSLFYKIFETYDSQKKGLLDSPTAVEIFRKSGLNRSDLEHIWNLCDINNRGQLSKQEFALGMHLVYRKLNGKILPNRLPPSLIPSSNKILDNVKNQLKVASTSNDTKKAPSRTDGLSYKNNDDENILPSFRNRRKNYSTNGTSSSSLDNTPRGSPVTVSGANVSSDTGVTTAVTTSSAPVAPVASAVVKDGRIDMLQKSIREKRGQLEAEISRNRRMLNQSAENRENDMRMIGSLKDKIANVPHILYTKNSSIPDDLNRRIDTIVSRIPVLFSEIADIEFAISNSKIELYKLQNPSSIIGSGPHGEITDEDRKKARSKALLKSRMAALTGKAEEAGNSIEEEEARYNKAVANIRNESRKNRGIIGDIRGSISELSASLMSTLTGGAAGQNTSEFEKWEFGVGLEKEVRTFIETLKSGGILSGSSLSTETNLNDKEDERVQYLKDQAQRKMEQKLAELGINKPAESPSQQSLSSPSQMEAQATPVKSPFQETQHADERSEDSEDEEEKRLREELERIKLKKKADKEKRLAELRRQVQDAQAESDDGFSSSVSGSNNGNVLAPQVEGTVGHVEYPAVPSAANPVSSVSASMSGSSTPVQGTSAAARNPFFKSTDSSNSTSGLSDLKAAEAQRRSQRGLDDDADAWSDDEPSPVAPAPVAPAPVAPAPVAPAPVAPAPVAPAPVAPAPVAPAPAPVAPSPVAPVPVAPSPVAPAPVAPSPVAPVPVAPSPAAPQPSNLPPVPIAPPLPQVQGVPQPVVPLAPPLPQVKQEEQGNFLAPPPSLPHMDNIQNSQNLDSHSDQDDVLSIPDSVASEDELGDEPGLPPSGIPPPPPLP.

Low complexity predominate over residues 1–54 (MFNSFQQQGTIQPQGTGYYPTQQGQQGQQGQQGQQGQQGQQGQQQQSFQSQPPF). Disordered regions lie at residues 1–175 (MFNS…INPI) and 240–259 (TGLY…QPQQ). Residues 70-104 (QGQSSFGNTSQMTNQPSSGFTSGQYAGGSNANSNL) are compositionally biased toward polar residues. Low complexity predominate over residues 105–126 (FNQSSQQFGGVGNNNVNVNQSS). The span at 127–142 (DPSSLLPQGGSYNNAG) shows a compositional bias: polar residues. The span at 146-163 (PQLQPVQSVQSVHSMHSL) shows a compositional bias: low complexity. Residues 165–175 (PAQTMSSINPI) show a composition bias toward polar residues. Residues 244 to 259 (SSASQPAQAANLQPQQ) show a composition bias toward low complexity. 2 EH domains span residues 321–410 (DQAK…VNSF) and 661–750 (EKSL…SNKI). 2 EF-hand domains span residues 354-389 (LQPK…VNEV) and 694-729 (LNRS…VYRK). The segment at 761–828 (ASTSNDTKKA…VSGANVSSDT (68 aa)) is disordered. Positions 798–823 (YSTNGTSSSSLDNTPRGSPVTVSGAN) are enriched in polar residues. Coiled coils occupy residues 982–1022 (LKSR…RKNR) and 1098–1207 (ERVQ…DDGF). Disordered regions lie at residues 1120-1225 (INKP…PQVE) and 1237-1492 (PSAA…PPLP). Residues 1126–1137 (SPSQQSLSSPSQ) are compositionally biased toward low complexity. The segment covering 1167-1196 (EKRLREELERIKLKKKADKEKRLAELRRQV) has biased composition (basic and acidic residues). 3 stretches are compositionally biased toward low complexity: residues 1206-1219 (GFSS…NGNV), 1237-1257 (PSAA…STPV), and 1271-1284 (STDS…LSDL). A compositionally biased stretch (basic and acidic residues) spans 1285–1298 (KAAEAQRRSQRGLD). A compositionally biased stretch (acidic residues) spans 1299-1309 (DDADAWSDDEP). Composition is skewed to pro residues over residues 1311–1406 (PVAP…PPLP), 1414–1423 (PVVPLAPPLP), and 1479–1492 (GLPP…PPLP).

The protein belongs to the PAN1 family. Component of the PAN1 actin cytoskeleton-regulatory complex.

The protein resides in the cell membrane. It localises to the endosome membrane. Its subcellular location is the cytoplasm. It is found in the cytoskeleton. The protein localises to the actin patch. Functionally, component of the PAN1 actin cytoskeleton-regulatory complex required for the internalization of endosomes during actin-coupled endocytosis. The complex links the site of endocytosis to the cell membrane-associated actin cytoskeleton. Mediates uptake of external molecules and vacuolar degradation of plasma membrane proteins. Plays a role in the proper organization of the cell membrane-associated actin cytoskeleton and promotes its destabilization. This chain is Actin cytoskeleton-regulatory complex protein PAN1 (PAN1), found in Vanderwaltozyma polyspora (strain ATCC 22028 / DSM 70294 / BCRC 21397 / CBS 2163 / NBRC 10782 / NRRL Y-8283 / UCD 57-17) (Kluyveromyces polysporus).